We begin with the raw amino-acid sequence, 102 residues long: MDVDIISEEENPMLHRTDIRFETTHEEATPSRLSVRDSLAAKLDKASEEVVVHELDTKFGMRKTIGYAKVYDTAEDALDVEQEYMLERNKIGGEVEADAEEA.

The protein belongs to the eukaryotic ribosomal protein eS24 family.

The protein is Small ribosomal subunit protein eS24 of Halorubrum lacusprofundi (strain ATCC 49239 / DSM 5036 / JCM 8891 / ACAM 34).